We begin with the raw amino-acid sequence, 148 residues long: HTH-type transcriptional regulator BilQ (148 aa).

The HTH marR-type domain occupies M1–D140. Positions L54–Q77 form a DNA-binding region, H-T-H motif.

Transcription regulator that regulates expression of the bilirubin reductase operon (bilQ, bilR and bilS). The polypeptide is HTH-type transcriptional regulator BilQ (Clostridioides difficile (strain CD3)).